The chain runs to 376 residues: Chaperone protein DnaJ (376 aa).

The J domain maps to 5–70; it reads DYYEILGVSK…QKRAAYDQYG (66 aa). A CR-type zinc finger spans residues 131-209; the sequence is GVTKEIRIPT…CHGHGRVERS (79 aa). Zn(2+)-binding residues include Cys144, Cys147, Cys161, Cys164, Cys183, Cys186, Cys197, and Cys200. CXXCXGXG motif repeat units follow at residues 144-151, 161-168, 183-190, and 197-204; these read CDVCHGSG, CPTCHGSG, CPHCQGRG, and CNKCHGHG.

The protein belongs to the DnaJ family. As to quaternary structure, homodimer. The cofactor is Zn(2+).

It localises to the cytoplasm. Its function is as follows. Participates actively in the response to hyperosmotic and heat shock by preventing the aggregation of stress-denatured proteins and by disaggregating proteins, also in an autonomous, DnaK-independent fashion. Unfolded proteins bind initially to DnaJ; upon interaction with the DnaJ-bound protein, DnaK hydrolyzes its bound ATP, resulting in the formation of a stable complex. GrpE releases ADP from DnaK; ATP binding to DnaK triggers the release of the substrate protein, thus completing the reaction cycle. Several rounds of ATP-dependent interactions between DnaJ, DnaK and GrpE are required for fully efficient folding. Also involved, together with DnaK and GrpE, in the DNA replication of plasmids through activation of initiation proteins. This chain is Chaperone protein DnaJ, found in Escherichia coli O157:H7 (strain EC4115 / EHEC).